Consider the following 319-residue polypeptide: tRNA U34 carboxymethyltransferase (319 aa).

Carboxy-S-adenosyl-L-methionine contacts are provided by residues Lys88, Trp102, Lys107, Gly126, 176–177, Met192, Tyr196, and Arg311; that span reads LE.

The protein belongs to the class I-like SAM-binding methyltransferase superfamily. CmoB family. In terms of assembly, homotetramer.

The enzyme catalyses carboxy-S-adenosyl-L-methionine + 5-hydroxyuridine(34) in tRNA = 5-carboxymethoxyuridine(34) in tRNA + S-adenosyl-L-homocysteine + H(+). Functionally, catalyzes carboxymethyl transfer from carboxy-S-adenosyl-L-methionine (Cx-SAM) to 5-hydroxyuridine (ho5U) to form 5-carboxymethoxyuridine (cmo5U) at position 34 in tRNAs. The protein is tRNA U34 carboxymethyltransferase of Pseudomonas syringae pv. tomato (strain ATCC BAA-871 / DC3000).